Consider the following 629-residue polypeptide: Ras GTPase-activating protein gap-1 (629 aa).

The region spanning 183–398 (DRIRPVLSSL…SVMASFLDNI (216 aa)) is the Ras-GAP domain. The region spanning 411–507 (TVFKFGNLQQ…WLNAIERQRN (97 aa)) is the PH domain.

Its subcellular location is the cytoplasm. Functionally, GTPase-activating protein, which inhibits the vulval induction by acting as a negative regulator for the member of the Ras family let-60. Probably decreases the signaling activity of Ras by stimulating its intrinsic GTPase activity, thereby lowering the levels of GTP-bound, active Ras. This Caenorhabditis elegans protein is Ras GTPase-activating protein gap-1 (gap-1).